The following is a 436-amino-acid chain: S-locus-specific glycoprotein S6 (436 aa).

An N-terminal signal peptide occupies residues 1–31 (MKGVRKPYDNSYTLSFLLVFFVLILFCPAFS). The region spanning 34–156 (TLSSTESLRI…SNNDASEYLW (123 aa)) is the Bulb-type lectin domain. N-linked (GlcNAc...) asparagine glycans are attached at residues N46, N64, N114, N121, N245, N261, and N390. Residues 351–431 (CSGDGFTRMK…HGQDLYVRLA (81 aa)) form the PAN domain. 2 disulfide bridges follow: C381–C406 and C389–C391.

As to expression, stigma.

Its function is as follows. Involved in sporophytic self-incompatibility system (the inability of flowering plants to achieve self-fertilization). The polypeptide is S-locus-specific glycoprotein S6 (SLSG) (Brassica oleracea (Wild cabbage)).